A 103-amino-acid chain; its full sequence is Co-chaperonin GroES (103 aa).

Belongs to the GroES chaperonin family. As to quaternary structure, heptamer of 7 subunits arranged in a ring. Interacts with the chaperonin GroEL.

It is found in the cytoplasm. Functionally, together with the chaperonin GroEL, plays an essential role in assisting protein folding. The GroEL-GroES system forms a nano-cage that allows encapsulation of the non-native substrate proteins and provides a physical environment optimized to promote and accelerate protein folding. GroES binds to the apical surface of the GroEL ring, thereby capping the opening of the GroEL channel. This is Co-chaperonin GroES from Parasynechococcus marenigrum (strain WH8102).